The following is a 210-amino-acid chain: Protein GrpE (210 aa).

Residues 1-31 are disordered; it reads MAKDPQTPTDEELARAERDAEPQPGDATDDE. The span at 12–21 shows a compositional bias: basic and acidic residues; it reads ELARAERDAE.

It belongs to the GrpE family. As to quaternary structure, homodimer.

Its subcellular location is the cytoplasm. Participates actively in the response to hyperosmotic and heat shock by preventing the aggregation of stress-denatured proteins, in association with DnaK and GrpE. It is the nucleotide exchange factor for DnaK and may function as a thermosensor. Unfolded proteins bind initially to DnaJ; upon interaction with the DnaJ-bound protein, DnaK hydrolyzes its bound ATP, resulting in the formation of a stable complex. GrpE releases ADP from DnaK; ATP binding to DnaK triggers the release of the substrate protein, thus completing the reaction cycle. Several rounds of ATP-dependent interactions between DnaJ, DnaK and GrpE are required for fully efficient folding. This chain is Protein GrpE, found in Chromohalobacter salexigens (strain ATCC BAA-138 / DSM 3043 / CIP 106854 / NCIMB 13768 / 1H11).